The sequence spans 194 residues: MHNNENVSGISAYLLGLIIGDGGLYKLKYKGNRSEYRVVITQKSENLIKQHIAPLMQFLIDELNVKSKIQIVKGDTRYELRVSSKKLYYYFANMLERIRLFNMREQIAFIKGLYVAEGDKTLKRLRIWNKNKALLEIVSRWLNNLGVRNTIHLDDHRHGVYVLNISLRDRIKFVHTILSSHLNPLPPERAGGYT.

Residues 14–147 form the DOD-type homing endonuclease domain; the sequence is LLGLIIGDGG…VSRWLNNLGV (134 aa). Active-site residues include D21 and E117.

The cofactor is a divalent metal cation.

Its function is as follows. Endonuclease involved in intron homing. Recognizes DNA in the 23S rRNA gene intron (minimally 5'-CCGGGTAAGTTCCGG-3'), cutting after A-8 on the top and C-11 on the bottom strand. Has a slow turnover rate, cuts the coding strand with a slight preference over the non-coding strand. The protein is Homing endonuclease I-DmoI of Desulfurococcus mucosus (Desulfurococcus mobilis).